The chain runs to 288 residues: Quinate/shikimate dehydrogenase (288 aa).

Residues Lys-71 and Asp-107 each contribute to the substrate site. Residues 132 to 135 (AGGA), 155 to 158 (NRKD), Lys-205, 232 to 235 (CVYN), and Gly-255 each bind NAD(+).

It belongs to the shikimate dehydrogenase family. Homodimer.

The enzyme catalyses L-quinate + NAD(+) = 3-dehydroquinate + NADH + H(+). The catalysed reaction is L-quinate + NADP(+) = 3-dehydroquinate + NADPH + H(+). It catalyses the reaction shikimate + NADP(+) = 3-dehydroshikimate + NADPH + H(+). It carries out the reaction shikimate + NAD(+) = 3-dehydroshikimate + NADH + H(+). It functions in the pathway metabolic intermediate biosynthesis; chorismate biosynthesis; chorismate from D-erythrose 4-phosphate and phosphoenolpyruvate: step 4/7. In terms of biological role, the actual biological function of YdiB remains unclear, nor is it known whether 3-dehydroshikimate or quinate represents the natural substrate. Catalyzes the reversible NAD-dependent reduction of both 3-dehydroshikimate (DHSA) and 3-dehydroquinate to yield shikimate (SA) and quinate, respectively. It can use both NAD or NADP for catalysis, however it has higher catalytic efficiency with NAD. The polypeptide is Quinate/shikimate dehydrogenase (Salmonella agona (strain SL483)).